Reading from the N-terminus, the 263-residue chain is S-adenosylmethionine decarboxylase proenzyme (263 aa).

The active-site Schiff-base intermediate with substrate; via pyruvic acid is the Ser113. Ser113 bears the Pyruvic acid (Ser); by autocatalysis mark. The active-site Proton acceptor; for processing activity is His118. Residue Cys141 is the Proton donor; for catalytic activity of the active site.

It belongs to the prokaryotic AdoMetDC family. Type 2 subfamily. Heterooctamer of four alpha and four beta chains arranged as a tetramer of alpha/beta heterodimers. Pyruvate serves as cofactor. Is synthesized initially as an inactive proenzyme. Formation of the active enzyme involves a self-maturation process in which the active site pyruvoyl group is generated from an internal serine residue via an autocatalytic post-translational modification. Two non-identical subunits are generated from the proenzyme in this reaction, and the pyruvate is formed at the N-terminus of the alpha chain, which is derived from the carboxyl end of the proenzyme. The post-translation cleavage follows an unusual pathway, termed non-hydrolytic serinolysis, in which the side chain hydroxyl group of the serine supplies its oxygen atom to form the C-terminus of the beta chain, while the remainder of the serine residue undergoes an oxidative deamination to produce ammonia and the pyruvoyl group blocking the N-terminus of the alpha chain.

The catalysed reaction is S-adenosyl-L-methionine + H(+) = S-adenosyl 3-(methylsulfanyl)propylamine + CO2. The protein operates within amine and polyamine biosynthesis; S-adenosylmethioninamine biosynthesis; S-adenosylmethioninamine from S-adenosyl-L-methionine: step 1/1. Functionally, catalyzes the decarboxylation of S-adenosylmethionine to S-adenosylmethioninamine (dcAdoMet), the propylamine donor required for the synthesis of the polyamines spermine and spermidine from the diamine putrescine. The protein is S-adenosylmethionine decarboxylase proenzyme of Marinobacter nauticus (strain ATCC 700491 / DSM 11845 / VT8) (Marinobacter aquaeolei).